Reading from the N-terminus, the 129-residue chain is Small ribosomal subunit protein eS6 (129 aa).

The disordered stretch occupies residues 53 to 88 (TGGSDTSGRPMRPDVRGVTTKEIMSDGGVGFEPTTD).

Belongs to the eukaryotic ribosomal protein eS6 family.

The chain is Small ribosomal subunit protein eS6 (rps6e) from Haloarcula marismortui (strain ATCC 43049 / DSM 3752 / JCM 8966 / VKM B-1809) (Halobacterium marismortui).